A 251-amino-acid chain; its full sequence is ATP synthase subunit a (251 aa).

The next 5 membrane-spanning stretches (helical) occupy residues 34–54, 93–113, 130–150, 195–215, and 216–236; these read VFLTSWFVIGVLVLASVAASS, FVGTLFLFIFVSNWSGALVPF, INTTVALALLTSLAYFYAGFS, LVVGVLVLLVPLFVPLPVMAL, and GLFTSAIQALIFATLAAAYIG.

The protein belongs to the ATPase A chain family. In terms of assembly, F-type ATPases have 2 components, CF(1) - the catalytic core - and CF(0) - the membrane proton channel. CF(1) has five subunits: alpha(3), beta(3), gamma(1), delta(1), epsilon(1). CF(0) has four main subunits: a, b, b' and c.

The protein localises to the cellular thylakoid membrane. Functionally, key component of the proton channel; it plays a direct role in the translocation of protons across the membrane. The protein is ATP synthase subunit a of Nostoc sp. (strain PCC 7120 / SAG 25.82 / UTEX 2576).